The sequence spans 464 residues: Glutamate--tRNA ligase (464 aa).

The 'HIGH' region motif lies at 9–19 (PSPTGYLHIGG). The 'KMSKS' region signature appears at 242–246 (KISKR). ATP is bound at residue lysine 245.

This sequence belongs to the class-I aminoacyl-tRNA synthetase family. Glutamate--tRNA ligase type 1 subfamily. In terms of assembly, monomer.

It is found in the cytoplasm. The enzyme catalyses tRNA(Glu) + L-glutamate + ATP = L-glutamyl-tRNA(Glu) + AMP + diphosphate. Its function is as follows. Catalyzes the attachment of glutamate to tRNA(Glu) in a two-step reaction: glutamate is first activated by ATP to form Glu-AMP and then transferred to the acceptor end of tRNA(Glu). The chain is Glutamate--tRNA ligase from Neisseria meningitidis serogroup A / serotype 4A (strain DSM 15465 / Z2491).